A 270-amino-acid chain; its full sequence is 4-hydroxy-tetrahydrodipicolinate reductase (270 aa).

Residues 11-16 (GCQGRM) and Glu37 each bind NAD(+). Arg38 contributes to the NADP(+) binding site. NAD(+) is bound by residues 101-103 (GTT) and 125-128 (ASNF). His158 functions as the Proton donor/acceptor in the catalytic mechanism. His159 provides a ligand contact to (S)-2,3,4,5-tetrahydrodipicolinate. Residue Lys162 is the Proton donor of the active site. 168 to 169 (GT) serves as a coordination point for (S)-2,3,4,5-tetrahydrodipicolinate.

The protein belongs to the DapB family.

It is found in the cytoplasm. The catalysed reaction is (S)-2,3,4,5-tetrahydrodipicolinate + NAD(+) + H2O = (2S,4S)-4-hydroxy-2,3,4,5-tetrahydrodipicolinate + NADH + H(+). The enzyme catalyses (S)-2,3,4,5-tetrahydrodipicolinate + NADP(+) + H2O = (2S,4S)-4-hydroxy-2,3,4,5-tetrahydrodipicolinate + NADPH + H(+). It functions in the pathway amino-acid biosynthesis; L-lysine biosynthesis via DAP pathway; (S)-tetrahydrodipicolinate from L-aspartate: step 4/4. Functionally, catalyzes the conversion of 4-hydroxy-tetrahydrodipicolinate (HTPA) to tetrahydrodipicolinate. The sequence is that of 4-hydroxy-tetrahydrodipicolinate reductase from Tolumonas auensis (strain DSM 9187 / NBRC 110442 / TA 4).